Here is a 356-residue protein sequence, read N- to C-terminus: Phosphate acyltransferase (356 aa).

The protein belongs to the PlsX family. Homodimer. Probably interacts with PlsY.

The protein resides in the cytoplasm. It carries out the reaction a fatty acyl-[ACP] + phosphate = an acyl phosphate + holo-[ACP]. It functions in the pathway lipid metabolism; phospholipid metabolism. Functionally, catalyzes the reversible formation of acyl-phosphate (acyl-PO(4)) from acyl-[acyl-carrier-protein] (acyl-ACP). This enzyme utilizes acyl-ACP as fatty acyl donor, but not acyl-CoA. The protein is Phosphate acyltransferase of Shigella flexneri serotype 5b (strain 8401).